We begin with the raw amino-acid sequence, 524 residues long: Solute carrier family 2, facilitated glucose transporter member 2 (524 aa).

Over 1 to 6 (MTEDKI) the chain is Cytoplasmic. The helical transmembrane segment at 7–26 (TGTLVFAVLTAVLGSFQFGY) threads the bilayer. The Extracellular portion of the chain corresponds to 27 to 89 (DIGVINAPQQ…SWAEEETTAS (63 aa)). An N-linked (GlcNAc...) asparagine glycan is attached at Asn62. Residues 90–115 (ASLIIMLWSLSVSIFAIGGMIASFFG) traverse the membrane as a helical segment. The Cytoplasmic portion of the chain corresponds to 116–126 (GMLGDRLGRIK). Residues 127–145 (AMLVANILSLVGALLMWFS) traverse the membrane as a helical segment. Residues 146–150 (KLGPS) are Extracellular-facing. The helical transmembrane segment at 151 to 176 (HILIISGRGISGLYCGLISGLVPMYI) threads the bilayer. Residues 177–187 (GEIAPTKFRGA) are Cytoplasmic-facing. The helical transmembrane segment at 188–211 (IGALHQLAIVTGILVSQIIGLDFL) threads the bilayer. Residue Gln193 coordinates D-glucose. Residues 212-216 (LGNHE) are Extracellular-facing. The chain crosses the membrane as a helical span at residues 217–239 (LWHILLGLSAVPAVLQSLMLFFC). At 240 to 303 (PESPRYLYIK…LFTNSSYRQP (64 aa)) the chain is on the cytoplasmic side. The helical transmembrane segment at 304–327 (ILVALMLHMAQQFSGINGIFYYST) threads the bilayer. D-glucose-binding positions include 314-315 (QQ) and Asn320. The Extracellular segment spans residues 328–338 (SIFQTAGISQP). Residues 339 to 360 (VYATIGVGAINTIFTALSVFLV) traverse the membrane as a helical segment. Asn349 contributes to the D-glucose binding site. At 361–366 (EKAGRR) the chain is on the cytoplasmic side. The helical transmembrane segment at 367–389 (SLFLIGMSGMFVCAIFMSVGLVL) threads the bilayer. The Extracellular segment spans residues 390–394 (LDKLP). The chain crosses the membrane as a helical span at residues 395–413 (WMSYVSMTAIFLFVSFFEI). Glu412 and Trp420 together coordinate D-glucose. The Cytoplasmic segment spans residues 414-433 (GPGPIPWFMVAEFFSQGPRP). The chain crosses the membrane as a helical span at residues 434-458 (AALAMAAFSNWTCNFIIALCFQYIA). The Extracellular portion of the chain corresponds to 459–463 (DFCGP). A helical membrane pass occupies residues 464 to 482 (YVFFLFAGVVLVFTLFTFF). Topologically, residues 483–524 (KVPETKGKSFEEIAAEFQKKSGSAQSPKAAVEMEFLGATETV) are cytoplasmic. Thr523 is subject to Phosphothreonine.

The protein belongs to the major facilitator superfamily. Sugar transporter (TC 2.A.1.1) family. Glucose transporter subfamily. In terms of processing, N-glycosylated; required for stability and retention at the cell surface of pancreatic beta cells.

The protein resides in the cell membrane. It carries out the reaction D-glucose(out) = D-glucose(in). The enzyme catalyses D-fructose(out) = D-fructose(in). The catalysed reaction is L-dehydroascorbate(out) = L-dehydroascorbate(in). It catalyses the reaction D-galactose(in) = D-galactose(out). D-glucose and maltose competitively inhibit fructose transport. D-glucose, D-fructose and maltose inhibit deoxyglucose transport. Facilitative hexose transporter that mediates the transport of glucose, fructose and galactose. Likely mediates the bidirectional transfer of glucose across the plasma membrane of hepatocytes and is responsible for uptake of glucose by the beta cells; may comprise part of the glucose-sensing mechanism of the beta cell. May also participate with the Na(+)/glucose cotransporter in the transcellular transport of glucose in the small intestine and kidney. Also able to mediate the transport of dehydroascorbate. This Sus scrofa (Pig) protein is Solute carrier family 2, facilitated glucose transporter member 2.